The following is a 359-amino-acid chain: Tropomodulin-1 (359 aa).

Residues 36–61 (ELDPDNALLPAGLRQKDQTTKAPTGP) are disordered. The interval 39-138 (PDNALLPAGL…CDIAAILGMH (100 aa)) is tropomyosin-binding.

The protein belongs to the tropomodulin family. Binds to the N-terminus of tropomyosin and to actin. Interacts with FLII. As to expression, highly expressed in the erythrocyte, heart and skeletal muscle.

It localises to the cytoplasm. The protein localises to the cytoskeleton. In terms of biological role, blocks the elongation and depolymerization of the actin filaments at the pointed end. The Tmod/TM complex contributes to the formation of the short actin protofilament, which in turn defines the geometry of the membrane skeleton. May play an important role in regulating the organization of actin filaments by preferentially binding to a specific tropomyosin isoform at its N-terminus. The polypeptide is Tropomodulin-1 (TMOD1) (Homo sapiens (Human)).